The following is a 275-amino-acid chain: 4-diphosphocytidyl-2-C-methyl-D-erythritol kinase (275 aa).

Lysine 14 is a catalytic residue. 98-108 (PMGAGLGGGSS) is a binding site for ATP. The active site involves aspartate 140.

It belongs to the GHMP kinase family. IspE subfamily.

It carries out the reaction 4-CDP-2-C-methyl-D-erythritol + ATP = 4-CDP-2-C-methyl-D-erythritol 2-phosphate + ADP + H(+). The protein operates within isoprenoid biosynthesis; isopentenyl diphosphate biosynthesis via DXP pathway; isopentenyl diphosphate from 1-deoxy-D-xylulose 5-phosphate: step 3/6. Functionally, catalyzes the phosphorylation of the position 2 hydroxy group of 4-diphosphocytidyl-2C-methyl-D-erythritol. This Francisella philomiragia subsp. philomiragia (strain ATCC 25017 / CCUG 19701 / FSC 153 / O#319-036) protein is 4-diphosphocytidyl-2-C-methyl-D-erythritol kinase.